Consider the following 221-residue polypeptide: DNA repair and recombination protein RadB (221 aa).

It belongs to the eukaryotic RecA-like protein family. RadB subfamily.

Its function is as follows. Involved in DNA repair and in homologous recombination. May regulate the cleavage reactions of the branch-structured DNA. Has a very weak ATPase activity that is not stimulated by DNA. Binds DNA but does not promote DNA strands exchange. The polypeptide is DNA repair and recombination protein RadB (Thermococcus gammatolerans (strain DSM 15229 / JCM 11827 / EJ3)).